Reading from the N-terminus, the 235-residue chain is 2,3-bisphosphoglycerate-dependent phosphoglycerate mutase 1 (235 aa).

Substrate contacts are provided by residues 8 to 15, 21 to 22, Arg60, 87 to 90, Lys98, and 114 to 115; these read RHGESVAN, TG, ERHY, and RR. The Tele-phosphohistidine intermediate role is filled by His9. Glu87 functions as the Proton donor/acceptor in the catalytic mechanism.

Belongs to the phosphoglycerate mutase family. BPG-dependent PGAM subfamily.

The catalysed reaction is (2R)-2-phosphoglycerate = (2R)-3-phosphoglycerate. Its pathway is carbohydrate degradation; glycolysis; pyruvate from D-glyceraldehyde 3-phosphate: step 3/5. In terms of biological role, catalyzes the interconversion of 2-phosphoglycerate and 3-phosphoglycerate. This Latilactobacillus sakei subsp. sakei (strain 23K) (Lactobacillus sakei subsp. sakei) protein is 2,3-bisphosphoglycerate-dependent phosphoglycerate mutase 1.